A 322-amino-acid chain; its full sequence is Malate dehydrogenase (322 aa).

NAD(+) is bound by residues 10–15 (GSGQIG) and Asp-34. Substrate contacts are provided by Arg-83 and Arg-89. NAD(+) contacts are provided by residues Asn-96 and 119 to 121 (ITN). Substrate contacts are provided by Asn-121 and Arg-152. His-176 acts as the Proton acceptor in catalysis.

Belongs to the LDH/MDH superfamily. MDH type 3 family.

It catalyses the reaction (S)-malate + NAD(+) = oxaloacetate + NADH + H(+). In terms of biological role, catalyzes the reversible oxidation of malate to oxaloacetate. The chain is Malate dehydrogenase from Nitrobacter winogradskyi (strain ATCC 25391 / DSM 10237 / CIP 104748 / NCIMB 11846 / Nb-255).